Here is a 234-residue protein sequence, read N- to C-terminus: Glycerol uptake facilitator protein (234 aa).

6 helical membrane-spanning segments follow: residues 9–29 (FLGTLILILLGNGVVAGVVLP), 37–57 (GWIVITMGWGIAVAVAVFVSG), 61–81 (PAYLNPAVTIGVALKGGLPWA), 83–103 (VLPYILAQFAGAMLGQILVWL), 135–155 (LISEILGTFVLVLTIFALGLY), and 159–179 (AGIGTFAVGTLIVGIGLSLGG). An NPA 1 motif is present at residues 65 to 67 (NPA). An NPA 2 motif is present at residues 186 to 188 (NPA). A helical transmembrane segment spans residues 214 to 234 (WIPVVGPVIGAALAVLVFSLF).

The protein belongs to the MIP/aquaporin (TC 1.A.8) family.

Its subcellular location is the cell membrane. The catalysed reaction is glycerol(in) = glycerol(out). Its function is as follows. Mediates glycerol diffusion across the cytoplasmic membrane via a pore-type mechanism. The chain is Glycerol uptake facilitator protein (glpF) from Streptococcus pneumoniae serotype 4 (strain ATCC BAA-334 / TIGR4).